The chain runs to 292 residues: Elongation factor Ts (292 aa).

The interval 80 to 83 (TDFV) is involved in Mg(2+) ion dislocation from EF-Tu.

This sequence belongs to the EF-Ts family.

The protein resides in the cytoplasm. Functionally, associates with the EF-Tu.GDP complex and induces the exchange of GDP to GTP. It remains bound to the aminoacyl-tRNA.EF-Tu.GTP complex up to the GTP hydrolysis stage on the ribosome. The sequence is that of Elongation factor Ts from Oenococcus oeni (strain ATCC BAA-331 / PSU-1).